We begin with the raw amino-acid sequence, 87 residues long: RNA-binding protein Hfq (87 aa).

The 60-residue stretch at Asp-9–Val-68 folds into the Sm domain.

Belongs to the Hfq family. As to quaternary structure, homohexamer.

Functionally, RNA chaperone that binds small regulatory RNA (sRNAs) and mRNAs to facilitate mRNA translational regulation in response to envelope stress, environmental stress and changes in metabolite concentrations. Also binds with high specificity to tRNAs. The polypeptide is RNA-binding protein Hfq (Pseudoalteromonas translucida (strain TAC 125)).